Consider the following 146-residue polypeptide: Large ribosomal subunit protein uL15 (146 aa).

The disordered stretch occupies residues 1 to 54 (MTLRLNELAPAEGAKREHRRLGRGIGSGVGKTGGRGIKGQKSRKSGGVRPGFEG). The span at 23-37 (RGIGSGVGKTGGRGI) shows a compositional bias: gly residues.

It belongs to the universal ribosomal protein uL15 family. In terms of assembly, part of the 50S ribosomal subunit.

Its function is as follows. Binds to the 23S rRNA. The polypeptide is Large ribosomal subunit protein uL15 (Acinetobacter baumannii (strain SDF)).